The primary structure comprises 224 residues: Holliday junction branch migration complex subunit RuvA (224 aa).

Residues 1–67 (MISWLKGEKV…EDGTSLYGFI (67 aa)) form a domain I region. The domain II stretch occupies residues 68–146 (EVNQRDLFRE…RFTDNDKTIH (79 aa)). Residues 147 to 157 (ENKNDIEANQF) are flexible linker. Residues 157–224 (FSKYIDEIYL…ILMKLSEKST (68 aa)) form a domain III region.

This sequence belongs to the RuvA family. Homotetramer. Forms an RuvA(8)-RuvB(12)-Holliday junction (HJ) complex. HJ DNA is sandwiched between 2 RuvA tetramers; dsDNA enters through RuvA and exits via RuvB. An RuvB hexamer assembles on each DNA strand where it exits the tetramer. Each RuvB hexamer is contacted by two RuvA subunits (via domain III) on 2 adjacent RuvB subunits; this complex drives branch migration. In the full resolvosome a probable DNA-RuvA(4)-RuvB(12)-RuvC(2) complex forms which resolves the HJ.

Its subcellular location is the cytoplasm. Functionally, the RuvA-RuvB-RuvC complex processes Holliday junction (HJ) DNA during genetic recombination and DNA repair, while the RuvA-RuvB complex plays an important role in the rescue of blocked DNA replication forks via replication fork reversal (RFR). RuvA specifically binds to HJ cruciform DNA, conferring on it an open structure. The RuvB hexamer acts as an ATP-dependent pump, pulling dsDNA into and through the RuvAB complex. HJ branch migration allows RuvC to scan DNA until it finds its consensus sequence, where it cleaves and resolves the cruciform DNA. This chain is Holliday junction branch migration complex subunit RuvA, found in Prochlorococcus marinus (strain NATL2A).